We begin with the raw amino-acid sequence, 284 residues long: NH(3)-dependent NAD(+) synthetase (284 aa).

51–58 (GISGGIDS) lines the ATP pocket. D57 contributes to the Mg(2+) binding site. R148 is a binding site for deamido-NAD(+). T168 serves as a coordination point for ATP. Position 173 (E173) interacts with Mg(2+). The deamido-NAD(+) site is built by K181 and D188. Residues K197 and T219 each contribute to the ATP site. Residue 268–269 (HK) coordinates deamido-NAD(+).

This sequence belongs to the NAD synthetase family. Homodimer.

It catalyses the reaction deamido-NAD(+) + NH4(+) + ATP = AMP + diphosphate + NAD(+) + H(+). It functions in the pathway cofactor biosynthesis; NAD(+) biosynthesis; NAD(+) from deamido-NAD(+) (ammonia route): step 1/1. Catalyzes the ATP-dependent amidation of deamido-NAD to form NAD. Uses ammonia as a nitrogen source. The sequence is that of NH(3)-dependent NAD(+) synthetase from Burkholderia pseudomallei (strain 1106a).